The sequence spans 424 residues: Tyrosine--tRNA ligase (424 aa).

Residue Y37 coordinates L-tyrosine. The 'HIGH' region signature appears at 42 to 51 (PTADSLHLGH). An N6-acetyllysine modification is found at K144. Residues Y175 and Q179 each coordinate L-tyrosine. Positions 235-239 (KFGKT) match the 'KMSKS' region motif. K238 serves as a coordination point for ATP. An S4 RNA-binding domain is found at 357–414 (ADLMQALVDSELQPSRGQARKTIASNAITINGEKQSDPEYFFKEEDRLFGRFTLLRRG).

It belongs to the class-I aminoacyl-tRNA synthetase family. TyrS type 1 subfamily. As to quaternary structure, homodimer.

Its subcellular location is the cytoplasm. The enzyme catalyses tRNA(Tyr) + L-tyrosine + ATP = L-tyrosyl-tRNA(Tyr) + AMP + diphosphate + H(+). Its function is as follows. Catalyzes the attachment of tyrosine to tRNA(Tyr) in a two-step reaction: tyrosine is first activated by ATP to form Tyr-AMP and then transferred to the acceptor end of tRNA(Tyr). This chain is Tyrosine--tRNA ligase, found in Escherichia coli O127:H6 (strain E2348/69 / EPEC).